Consider the following 105-residue polypeptide: Large ribosomal subunit protein eL42 (105 aa).

Positions 23–61 (KVTQYKKGKESKFAQGRRRYDRKQSGFGGQTKPIFRKKA) are disordered.

Belongs to the eukaryotic ribosomal protein eL42 family.

The sequence is that of Large ribosomal subunit protein eL42 from Caenorhabditis elegans.